We begin with the raw amino-acid sequence, 233 residues long: Enolase-phosphatase E1 (233 aa).

The protein belongs to the HAD-like hydrolase superfamily. MasA/MtnC family. As to quaternary structure, monomer. Mg(2+) serves as cofactor.

It catalyses the reaction 5-methylsulfanyl-2,3-dioxopentyl phosphate + H2O = 1,2-dihydroxy-5-(methylsulfanyl)pent-1-en-3-one + phosphate. The protein operates within amino-acid biosynthesis; L-methionine biosynthesis via salvage pathway; L-methionine from S-methyl-5-thio-alpha-D-ribose 1-phosphate: step 3/6. It participates in amino-acid biosynthesis; L-methionine biosynthesis via salvage pathway; L-methionine from S-methyl-5-thio-alpha-D-ribose 1-phosphate: step 4/6. Functionally, bifunctional enzyme that catalyzes the enolization of 2,3-diketo-5-methylthiopentyl-1-phosphate (DK-MTP-1-P) into the intermediate 2-hydroxy-3-keto-5-methylthiopentenyl-1-phosphate (HK-MTPenyl-1-P), which is then dephosphorylated to form the acireductone 1,2-dihydroxy-3-keto-5-methylthiopentene (DHK-MTPene). The sequence is that of Enolase-phosphatase E1 from Hahella chejuensis (strain KCTC 2396).